Reading from the N-terminus, the 183-residue chain is Integrase-like protein y4lS (183 aa).

A Resolvase/invertase-type recombinase catalytic domain is found at 2 to 136 (ARIGYARTFT…EGIAAARKRG (135 aa)).

Belongs to the site-specific recombinase resolvase family.

The polypeptide is Integrase-like protein y4lS (Sinorhizobium fredii (strain NBRC 101917 / NGR234)).